A 224-amino-acid chain; its full sequence is Adenylate kinase (224 aa).

An ATP-binding site is contributed by 10-15 (GSGKST). The tract at residues 30–59 (SSGDLIRREIERKSSLGREMEAYLSRGDLI) is NMP. Residues S31, R36, 57-59 (DLI), 83-86 (GYPR), and Q90 contribute to the AMP site. Residues 124-161 (GRRICPNCGAVYHVKYNPPKVPGICDVCGSELIQRADD) form an LID region. R125 lines the ATP pocket. The Zn(2+) site is built by C128 and C131. 134–135 (VY) is a binding site for ATP. Residues C148 and C151 each coordinate Zn(2+). R158 and R169 together coordinate AMP. G197 contacts ATP.

This sequence belongs to the adenylate kinase family. As to quaternary structure, monomer.

It localises to the cytoplasm. It carries out the reaction AMP + ATP = 2 ADP. Its pathway is purine metabolism; AMP biosynthesis via salvage pathway; AMP from ADP: step 1/1. In terms of biological role, catalyzes the reversible transfer of the terminal phosphate group between ATP and AMP. Plays an important role in cellular energy homeostasis and in adenine nucleotide metabolism. The polypeptide is Adenylate kinase (Thermococcus kodakarensis (strain ATCC BAA-918 / JCM 12380 / KOD1) (Pyrococcus kodakaraensis (strain KOD1))).